Consider the following 364-residue polypeptide: Heavy metal-associated isoprenylated plant protein 35 (364 aa).

Over residues 1 to 12 (MATDEMKSETKK) the composition is skewed to basic and acidic residues. The disordered stretch occupies residues 1 to 33 (MATDEMKSETKKTEHKQKQSTQIKQDLPPPTIP). In terms of domain architecture, HMA spans 39–102 (YKSCTLKVSI…KLNKAGKNAE (64 aa)). The a metal cation site is built by cysteine 50 and cysteine 53. A disordered region spans residues 101–265 (AEQLPEIPDP…PPTATDYDRP (165 aa)). Over residues 111–122 (VDNKPKPVDPKE) the composition is skewed to basic and acidic residues. The span at 134–144 (QITNEATSSGI) shows a compositional bias: polar residues. Composition is skewed to basic and acidic residues over residues 154-169 (ECDK…EKCL) and 180-198 (VKEE…KEES). Over residues 237–253 (SLATTNNPTDGPARTQS) the composition is skewed to polar residues. The residue at position 361 (cysteine 361) is a Cysteine methyl ester. Cysteine 361 is lipidated: S-farnesyl cysteine. The propeptide at 362-364 (AIM) is removed in mature form.

This sequence belongs to the HIPP family.

Its function is as follows. Heavy-metal-binding protein. This chain is Heavy metal-associated isoprenylated plant protein 35, found in Arabidopsis thaliana (Mouse-ear cress).